The sequence spans 224 residues: Small ribosomal subunit protein uS3 (224 aa).

In terms of domain architecture, KH type-2 spans 38 to 106 (IRKFISEKLK…QVHINIVEIK (69 aa)).

The protein belongs to the universal ribosomal protein uS3 family. Part of the 30S ribosomal subunit. Forms a tight complex with proteins S10 and S14.

Its function is as follows. Binds the lower part of the 30S subunit head. Binds mRNA in the 70S ribosome, positioning it for translation. This is Small ribosomal subunit protein uS3 from Lactobacillus acidophilus (strain ATCC 700396 / NCK56 / N2 / NCFM).